A 556-amino-acid chain; its full sequence is DNA ligase (556 aa).

Glu-245 is a binding site for ATP. Catalysis depends on Lys-247, which acts as the N6-AMP-lysine intermediate. ATP-binding residues include Arg-252, Arg-267, Glu-296, Phe-336, Arg-408, and Lys-414.

This sequence belongs to the ATP-dependent DNA ligase family. Mg(2+) is required as a cofactor.

It catalyses the reaction ATP + (deoxyribonucleotide)n-3'-hydroxyl + 5'-phospho-(deoxyribonucleotide)m = (deoxyribonucleotide)n+m + AMP + diphosphate.. In terms of biological role, DNA ligase that seals nicks in double-stranded DNA during DNA replication, DNA recombination and DNA repair. The protein is DNA ligase of Methanosphaerula palustris (strain ATCC BAA-1556 / DSM 19958 / E1-9c).